Here is a 275-residue protein sequence, read N- to C-terminus: Elongation factor Ts (275 aa).

Residues 76–79 form an involved in Mg(2+) ion dislocation from EF-Tu region; sequence TDFV.

This sequence belongs to the EF-Ts family.

It is found in the cytoplasm. Functionally, associates with the EF-Tu.GDP complex and induces the exchange of GDP to GTP. It remains bound to the aminoacyl-tRNA.EF-Tu.GTP complex up to the GTP hydrolysis stage on the ribosome. The polypeptide is Elongation factor Ts (Rhodococcus opacus (strain B4)).